The following is an 809-amino-acid chain: Lon protease (809 aa).

The Lon N-terminal domain maps to leucine 8 to isoleucine 203. Position 354–361 (glycine 354–threonine 361) interacts with ATP. Positions lysine 629–valine 809 constitute a Lon proteolytic domain. Active-site residues include serine 716 and lysine 759.

It belongs to the peptidase S16 family. In terms of assembly, homohexamer. Organized in a ring with a central cavity.

It localises to the cytoplasm. It carries out the reaction Hydrolysis of proteins in presence of ATP.. Functionally, ATP-dependent serine protease that mediates the selective degradation of mutant and abnormal proteins as well as certain short-lived regulatory proteins. Required for cellular homeostasis and for survival from DNA damage and developmental changes induced by stress. Degrades polypeptides processively to yield small peptide fragments that are 5 to 10 amino acids long. Binds to DNA in a double-stranded, site-specific manner. In Lachnoclostridium phytofermentans (strain ATCC 700394 / DSM 18823 / ISDg) (Clostridium phytofermentans), this protein is Lon protease.